The chain runs to 540 residues: uncharacterized protein (540 aa).

2 ABC transporter domains span residues I2–Q252 and L320–L537. G34–S41 contacts ATP.

This sequence belongs to the ABC transporter superfamily.

This is an uncharacterized protein from Bacillus subtilis (strain 168).